The following is a 119-amino-acid chain: Large ribosomal subunit protein uL18 (119 aa).

The protein belongs to the universal ribosomal protein uL18 family. As to quaternary structure, part of the 50S ribosomal subunit; part of the 5S rRNA/L5/L18/L25 subcomplex. Contacts the 5S and 23S rRNAs.

Its function is as follows. This is one of the proteins that bind and probably mediate the attachment of the 5S RNA into the large ribosomal subunit, where it forms part of the central protuberance. In Endomicrobium trichonymphae, this protein is Large ribosomal subunit protein uL18.